The chain runs to 806 residues: MDESKKARSGDKKKEKAVAGILPHSNKPARVPLIAVPSHPVFPGMFIPIVLISDSDMKAIDYAMKGNGIIALFVLNDKFLEKNNNNAQQKLIIDYSKDIYSVGVTGKIIKKINLPDGGYNIFVSTFDRIKFVKVVLNDKFPIIEIDYLKQIPVRKDDIQSKAVYGSILLRTKEIFAHRKMPEVQLNMVNIEDKGKLCDIVASTISSSKNDHQIVLETLNVKDRLKKVLELIYEELNLIEIQNKIAKGIQERLEKQQKEFFLKEQLKAIKAELGIGDKKSSDLEKLKTKLKALELKGEPLEVVEKELEKFSLLETSSAEYIVVRNYLELITELPWRDFKINFDKLDLQKSKKILDKTHYGMNEVKDRIIEYISVLKLRKTQKGAIILLVGPPGVGKTSIGAAIAKVLRTKFFRFSVGGMRDESEIKGHRRTYVGALPGKIIQGLRITKTNSPVFLIDEVDKISASSYGDPFSVLLEVLDPEQNVRFRDHYLDLPFDISNVFFILTANSVETIPRPLLNRMEIIEISGYIDNEKIEIARKYLIPKVLSENGVDKDSLKFQSSSLVQIAQEYARDNGVRNFEKYLNKIVRKVARKLIENTEVKSYQISNDNLEEYVGVPVFRKESMPNAMYSGMVMGLAWTNYGGSTLMIETVKTESKVGGIKLTGRLGDVMKESANIAYTYVNSIKGDLSISKSFFEKNIIHLHIPEGATPKDGPSAGITIASAFISLALNKVVRPHLAMTGELSLTGNVMMIGGLKEKIIAAKRSGVEHIIVPKANRVDLEEIPTNIKSGINFYLVDNMREVIKLLF.

In terms of domain architecture, Lon N-terminal spans 31 to 235 (VPLIAVPSHP…KVLELIYEEL (205 aa)). ATP is bound at residue 389–396 (GPPGVGKT). The 181-residue stretch at 626-806 (AMYSGMVMGL…NMREVIKLLF (181 aa)) folds into the Lon proteolytic domain. Catalysis depends on residues serine 714 and lysine 757.

It belongs to the peptidase S16 family. As to quaternary structure, homohexamer. Organized in a ring with a central cavity.

The protein localises to the cytoplasm. It catalyses the reaction Hydrolysis of proteins in presence of ATP.. Functionally, ATP-dependent serine protease that mediates the selective degradation of mutant and abnormal proteins as well as certain short-lived regulatory proteins. Required for cellular homeostasis and for survival from DNA damage and developmental changes induced by stress. Degrades polypeptides processively to yield small peptide fragments that are 5 to 10 amino acids long. Binds to DNA in a double-stranded, site-specific manner. In Borreliella burgdorferi (strain ATCC 35210 / DSM 4680 / CIP 102532 / B31) (Borrelia burgdorferi), this protein is Lon protease 1.